The primary structure comprises 197 residues: Ras-related protein Rab-7B (197 aa).

Residues 14 to 21 (GEKSVGKT), 33 to 38 (VTLKPT), 57 to 61 (DTSGQ), 119 to 122 (NKID), and 152 to 153 (AK) each bind GTP. An Effector region motif is present at residues 31–39 (RFVTLKPTI). 2 S-geranylgeranyl cysteine lipidation sites follow: Cys-196 and Cys-197.

The protein belongs to the small GTPase superfamily. Rab family.

Protein transport. Probably involved in vesicular traffic. The chain is Ras-related protein Rab-7B (rab7B) from Dictyostelium discoideum (Social amoeba).